The primary structure comprises 158 residues: GTP-dependent dephospho-CoA kinase (158 aa).

D35, V36, D54, K56, E109, and D132 together coordinate GTP.

This sequence belongs to the GTP-dependent DPCK family.

It catalyses the reaction 3'-dephospho-CoA + GTP = GDP + CoA + H(+). Its pathway is cofactor biosynthesis; coenzyme A biosynthesis. In terms of biological role, catalyzes the GTP-dependent phosphorylation of the 3'-hydroxyl group of dephosphocoenzyme A to form coenzyme A (CoA). This is GTP-dependent dephospho-CoA kinase from Methanococcus maripaludis (strain DSM 14266 / JCM 13030 / NBRC 101832 / S2 / LL).